Consider the following 751-residue polypeptide: Methionine--tRNA ligase, cytoplasmic (751 aa).

The residue at position 2 (serine 2) is an N-acetylserine. The interval 36-92 is interaction with ARC1; that stretch reads LKPEVDNDNAAMELRNTKEPFLLFDANAILRYVMDDFEGQTSDKYQFALASLQNLLY. Residues 205–215 carry the 'HIGH' region motif; sequence PYVNNVPHLGN. Lysine 411 contacts ATP. A 'KMSKS' region motif is present at residues 525–529; the sequence is KFSKS.

Belongs to the class-I aminoacyl-tRNA synthetase family. Component of a yeast aminoacyl-tRNA synthase (aaRS) complex formed by methionyl-tRNA synthase MES1, glutamyl-tRNA synthase GUS1 and the tRNA aminoacylation cofactor ARC1 in a stoichiometric complex. Interacts (via N-ter) with ARC1 (via N-ter). Can also form a stable binary complex with ARC1 that is functional in terms of aminoacylation. ARC1 increases the affinity for cognate tRNAs due to the presence of a tRNA binding domain in the middle and C-terminal part of ARC1.

The protein resides in the cytoplasm. The catalysed reaction is tRNA(Met) + L-methionine + ATP = L-methionyl-tRNA(Met) + AMP + diphosphate. Catalyzes the attachment of methionine to tRNA(Met) in a two-step reaction: methionine is first activated by ATP to form Met-AMP and then transferred to the acceptor end of tRNA(Met). The chain is Methionine--tRNA ligase, cytoplasmic (MES1) from Saccharomyces cerevisiae (strain ATCC 204508 / S288c) (Baker's yeast).